The following is a 180-amino-acid chain: Probable nicotinate-nucleotide adenylyltransferase (180 aa).

It belongs to the NadD family.

It carries out the reaction nicotinate beta-D-ribonucleotide + ATP + H(+) = deamido-NAD(+) + diphosphate. It functions in the pathway cofactor biosynthesis; NAD(+) biosynthesis; deamido-NAD(+) from nicotinate D-ribonucleotide: step 1/1. Its function is as follows. Catalyzes the reversible adenylation of nicotinate mononucleotide (NaMN) to nicotinic acid adenine dinucleotide (NaAD). This Pelagibacter ubique (strain HTCC1062) protein is Probable nicotinate-nucleotide adenylyltransferase.